The primary structure comprises 304 residues: Transcription factor BEE 2 (304 aa).

Residues 74–132 (FHMEPVKNNGHSRAITLQNKRKPEGKTEKREKKKIKAEDETEPSMKGKSNMSNTETSSE) are disordered. The segment covering 82–91 (NGHSRAITLQ) has biased composition (polar residues). Basic and acidic residues predominate over residues 94–103 (RKPEGKTEKR). Residues 120–132 (GKSNMSNTETSSE) show a composition bias toward polar residues. Residues 147-197 (EATDRHSLAERARREKISKKMKCLQDIVPGCNKVTGKAGMLDEIINYVQSL) form the bHLH domain.

In terms of assembly, homodimer. As to expression, expressed in stems and flowers.

The protein resides in the nucleus. Its function is as follows. Positive regulator of brassinosteroid signaling. This chain is Transcription factor BEE 2 (BEE2), found in Arabidopsis thaliana (Mouse-ear cress).